A 198-amino-acid chain; its full sequence is MSVIPYVIEQTSRGERSYDIFSRLLKDRIIFLGNAINDDYANVITAQLLFLEAENPERDIYLYLNSPGGYVSSGLAIYDTMQYIKPDVRTLCLGQASSMAALLLAGGAAGKRSALPNARIMMHQPMGGATGQASDIEIQAREVLKLKEILNSIYHKHTGKTVEQIQKDTERNFYMTADEAKNYGIIDTVIQIDRKQTE.

The active-site Nucleophile is the serine 98. The active site involves histidine 123.

This sequence belongs to the peptidase S14 family. In terms of assembly, fourteen ClpP subunits assemble into 2 heptameric rings which stack back to back to give a disk-like structure with a central cavity, resembling the structure of eukaryotic proteasomes.

It localises to the cytoplasm. The catalysed reaction is Hydrolysis of proteins to small peptides in the presence of ATP and magnesium. alpha-casein is the usual test substrate. In the absence of ATP, only oligopeptides shorter than five residues are hydrolyzed (such as succinyl-Leu-Tyr-|-NHMec, and Leu-Tyr-Leu-|-Tyr-Trp, in which cleavage of the -Tyr-|-Leu- and -Tyr-|-Trp bonds also occurs).. Its function is as follows. Cleaves peptides in various proteins in a process that requires ATP hydrolysis. Has a chymotrypsin-like activity. Plays a major role in the degradation of misfolded proteins. The sequence is that of ATP-dependent Clp protease proteolytic subunit 1 from Leptospira interrogans serogroup Icterohaemorrhagiae serovar copenhageni (strain Fiocruz L1-130).